The sequence spans 483 residues: MKVSKEKWEKNFSEWLDWVLREAEIYDYGRYPVKGMGVWMPYGFKIRQNVLQLIRKLLDETGHEEVLFPLLIPEDLLKKESEHIRGFEEEVYWVTKGGSQDLDVKLALRPTSETSITFMESFWVKSYKQLPKKYYQIVSVFRYETKATRPMMRLREITTFKEAHTLHETYEDAARQVDEAINIYKAFFDELGIPYMISKRPEWDKFAGAEYTIAFDTILPDSRVLQIGTVHHLGQHFTKAFDFKIQRKDGSLDYPHQTSYGISDRVIAVLIAINGDDHGPVLNPVIAPIKVVIVPIPAKDEETTAKIINYAKEVGENLKNRGITVVIDDDKEKTPGEKFYIWELKGVPLRIEIGPKELNNNTVYIKRRDTFEGKSVPKDKAVEEVNTLLEKIKNDLHEKALKFLKERIIYTEDLNEAKKILEERAGVVEVPWCGDNNCGLQLQDVTNARVLGIPLDEDKDVSNAKCVMCKKPAKSLLRLAKTY.

Belongs to the class-II aminoacyl-tRNA synthetase family. ProS type 3 subfamily. In terms of assembly, homodimer.

It localises to the cytoplasm. It carries out the reaction tRNA(Pro) + L-proline + ATP = L-prolyl-tRNA(Pro) + AMP + diphosphate. In terms of biological role, catalyzes the attachment of proline to tRNA(Pro) in a two-step reaction: proline is first activated by ATP to form Pro-AMP and then transferred to the acceptor end of tRNA(Pro). The polypeptide is Proline--tRNA ligase (Sulfurisphaera tokodaii (strain DSM 16993 / JCM 10545 / NBRC 100140 / 7) (Sulfolobus tokodaii)).